We begin with the raw amino-acid sequence, 465 residues long: ATP synthase subunit beta (465 aa).

148 to 155 contributes to the ATP binding site; sequence GGAGVGKT.

It belongs to the ATPase alpha/beta chains family. F-type ATPases have 2 components, CF(1) - the catalytic core - and CF(0) - the membrane proton channel. CF(1) has five subunits: alpha(3), beta(3), gamma(1), delta(1), epsilon(1). CF(0) has three main subunits: a(1), b(2) and c(9-12). The alpha and beta chains form an alternating ring which encloses part of the gamma chain. CF(1) is attached to CF(0) by a central stalk formed by the gamma and epsilon chains, while a peripheral stalk is formed by the delta and b chains.

The protein localises to the cell inner membrane. The catalysed reaction is ATP + H2O + 4 H(+)(in) = ADP + phosphate + 5 H(+)(out). Produces ATP from ADP in the presence of a proton gradient across the membrane. The catalytic sites are hosted primarily by the beta subunits. This Neisseria meningitidis serogroup A / serotype 4A (strain DSM 15465 / Z2491) protein is ATP synthase subunit beta.